The chain runs to 119 residues: Multi-drug resistance efflux pump PmrA homolog (119 aa).

Transmembrane regions (helical) follow at residues 1 to 20, 22 to 42, 64 to 84, and 88 to 108; these read ILIG…FVQS, LQLG…MPSV, MCSN…AGYI, and AAIV…FINF.

Belongs to the major facilitator superfamily.

The protein localises to the cell membrane. This chain is Multi-drug resistance efflux pump PmrA homolog (pmrA), found in Lactococcus lactis subsp. cremoris (Streptococcus cremoris).